Here is a 616-residue protein sequence, read N- to C-terminus: Probable beta-hexosaminidase ARB_01353 (616 aa).

Positions 1–20 (MRFAKALAITAVLLSGVVEA) are cleaved as a signal peptide. The interval 96-117 (KFDPFPDQSSKPKEKRQNAPPG) is disordered. N-linked (GlcNAc...) asparagine glycosylation occurs at Asn333. Glu361 functions as the Proton donor in the catalytic mechanism.

It belongs to the glycosyl hydrolase 20 family.

The protein localises to the secreted. It carries out the reaction Hydrolysis of terminal non-reducing N-acetyl-D-hexosamine residues in N-acetyl-beta-D-hexosaminides.. Functionally, beta-hexosaminidase that shows a broad substrate specificity. The chain is Probable beta-hexosaminidase ARB_01353 from Arthroderma benhamiae (strain ATCC MYA-4681 / CBS 112371) (Trichophyton mentagrophytes).